The primary structure comprises 607 residues: TOM1-like protein 8 (607 aa).

One can recognise a VHS domain in the interval 9 to 138 (ATSDMLIGPD…ELLRAGIVFP (130 aa)). Residues 141-175 (PQITPSSGQNGPSTRYPQNSRNARQEAIDTSTESE) are disordered. One can recognise a GAT domain in the interval 175 to 263 (EFPTLSLTEI…LLAKHEAIAS (89 aa)). S297 is modified (phosphoserine). Over residues 355 to 379 (NNCESSTPTSNPHANHQKVQQNYSN) the composition is skewed to polar residues. Disordered regions lie at residues 355–393 (NNCESSTPTSNPHANHQKVQQNYSNGFGPGHQEQSYYGQ), 407–460 (QPSS…SPTH), and 555–582 (DNGNNNTNPYQVSSHQPPPMMKPMNKKP). Phosphoserine is present on S410. Residues 448–460 (QSPSSSPQYSPTH) are compositionally biased toward low complexity. Residues 555-569 (DNGNNNTNPYQVSSH) show a composition bias toward polar residues.

It belongs to the TOM1 family. Specifically expressed in siliques and flowers.

The protein localises to the membrane. Functionally, might contribute to the loading of the ESCRT machinery. The chain is TOM1-like protein 8 from Arabidopsis thaliana (Mouse-ear cress).